Consider the following 537-residue polypeptide: Intercellular adhesion molecule 1 (537 aa).

The first 27 residues, 1–27, serve as a signal peptide directing secretion; the sequence is MASTRAKPTLPLLLALVTVVIPGPGDA. Residues 28–485 are Extracellular-facing; that stretch reads QVSIHPREAF…LTVLYHSQNN (458 aa). 2 consecutive Ig-like C2-type domains span residues 41 to 102 and 127 to 195; these read GGSV…QSSA and GKDL…LDLR. An N-linked (GlcNAc...) asparagine glycan is attached at asparagine 47. Disulfide bonds link cysteine 48/cysteine 91, cysteine 52/cysteine 95, and cysteine 134/cysteine 188. A Cell attachment site; atypical motif is present at residues 151–153; that stretch reads RGE. The Cell attachment site signature appears at 179–181; the sequence is RGD. Asparagine 185, asparagine 204, asparagine 267, asparagine 311, asparagine 362, asparagine 388, asparagine 409, asparagine 456, and asparagine 469 each carry an N-linked (GlcNAc...) asparagine glycan. An Ig-like C2-type 3 domain is found at 232–299; sequence GTQQKLFCSL…LRCVLELADQ (68 aa). The cysteines at positions 239 and 292 are disulfide-linked. One can recognise an Ig-like C2-type 4 domain in the interval 327–381; sequence GSQVTVKCEAHSGSKVVLLSGVEPRPPTPQVQFTLNASSEDHKRSFFCSAALEVA. A disulfide bridge links cysteine 334 with cysteine 374. 3 disulfides stabilise this stretch: cysteine 406–cysteine 422, cysteine 422–cysteine 461, and cysteine 434–cysteine 461. In terms of domain architecture, Ig-like C2-type 5 spans 415-468; that stretch reads GSQQTLKCQAWGNPSPKMTCRRKADGALLPIGVVKSVKQEMNGTYVCHAFSSHG. The helical transmembrane segment at 486-509 threads the bilayer; sequence WTIIILVPVLLVIVGLVMAASYVY. The Cytoplasmic portion of the chain corresponds to 510-537; sequence NRQRKIRIYKLQKAQEEAIKLKGQAPPP.

The protein belongs to the immunoglobulin superfamily. ICAM family. In terms of assembly, homodimer. Interacts with MUC1 and promotes cell aggregation in epithelial cells. Interacts with ARHGEF26/SGEF. Interacts (on T cell side) with CD81, CD247 and CD9 at immunological synapses between antigen-presenting cells and T cells. Post-translationally, monoubiquitinated, which is promoted by MARCH9 and leads to endocytosis. In terms of tissue distribution, expressed at low level on a subpopulation of lymphocytes, macrophages, and endothelial cells, but is strongly induced on these cells, and on fibroblasts and epithelial cells.

The protein resides in the membrane. Its function is as follows. ICAM proteins are ligands for the leukocyte adhesion protein LFA-1 (integrin alpha-L/beta-2). During leukocyte trans-endothelial migration, ICAM1 engagement promotes the assembly of endothelial apical cups through ARHGEF26/SGEF and RHOG activation. In Mus musculus (Mouse), this protein is Intercellular adhesion molecule 1 (Icam1).